Consider the following 80-residue polypeptide: Raniseptin-5 (80 aa).

The N-terminal stretch at 1–22 is a signal peptide; the sequence is MAFLKKSLFLVLFLGIVSLSIC. Positions 23-49 are excised as a propeptide; sequence EEEKREGEEEEKQEEENEELSEEELRE.

The protein belongs to the frog skin active peptide (FSAP) family. Dermaseptin subfamily. Expressed by the skin glands.

It is found in the secreted. In terms of biological role, has antibacterial activity. This Boana raniceps (Chaco tree frog) protein is Raniseptin-5.